We begin with the raw amino-acid sequence, 336 residues long: Formimidoylglutamase (336 aa).

Positions 129, 160, 162, 164, 257, and 259 each coordinate Mn(2+).

Belongs to the arginase family. It depends on Mn(2+) as a cofactor.

It catalyses the reaction N-formimidoyl-L-glutamate + H2O = formamide + L-glutamate. It participates in amino-acid degradation; L-histidine degradation into L-glutamate; L-glutamate from N-formimidoyl-L-glutamate (hydrolase route): step 1/1. Catalyzes the conversion of N-formimidoyl-L-glutamate to L-glutamate and formamide. This Vibrio vulnificus (strain YJ016) protein is Formimidoylglutamase.